Reading from the N-terminus, the 477-residue chain is ATP synthase subunit beta (477 aa).

Residue 163–170 (GGAGVGKT) coordinates ATP.

It belongs to the ATPase alpha/beta chains family. In terms of assembly, F-type ATPases have 2 components, CF(1) - the catalytic core - and CF(0) - the membrane proton channel. CF(1) has five subunits: alpha(3), beta(3), gamma(1), delta(1), epsilon(1). CF(0) has four main subunits: a(1), b(1), b'(1) and c(9-12).

It localises to the cellular thylakoid membrane. The enzyme catalyses ATP + H2O + 4 H(+)(in) = ADP + phosphate + 5 H(+)(out). In terms of biological role, produces ATP from ADP in the presence of a proton gradient across the membrane. The catalytic sites are hosted primarily by the beta subunits. The protein is ATP synthase subunit beta of Synechococcus sp. (strain JA-3-3Ab) (Cyanobacteria bacterium Yellowstone A-Prime).